The chain runs to 323 residues: NAC transcription factor 25 (323 aa).

The region spanning Leu16–Lys177 is the NAC domain. A DNA-binding region spans residues Val114 to Pro183. Over residues Lys201 to Asn221 the composition is skewed to low complexity. Positions Lys201–Glu223 are disordered.

In terms of tissue distribution, expressed specifically in the tapetum.

It localises to the nucleus. Its function is as follows. Transcription factor of the NAC family. May be associated with anther development and pollen production. Required for normal seed development and morphology. In Arabidopsis thaliana (Mouse-ear cress), this protein is NAC transcription factor 25 (NAC025).